The primary structure comprises 363 residues: Galanin receptor 2a (363 aa).

The Extracellular segment spans residues 1–23 (MNASQQIHVFSSHWKVESVIISL). Residues 24–44 (IFSMIFLVGTVGNCLVLAVLI) traverse the membrane as a helical segment. The Cytoplasmic segment spans residues 45 to 54 (RNGQMNTKST). A helical transmembrane segment spans residues 55-75 (NLFILNLGLADLCFIVFCVPL). At 76-94 (QATIYTMDEWVFGAFVCKA) the chain is on the extracellular side. A disulfide bond links cysteine 92 and cysteine 169. The chain crosses the membrane as a helical span at residues 95 to 115 (VHFIIYLTMYASIFTLAAVSL). Over 116–135 (DRYLAIRYPLRSRETRTPRN) the chain is Cytoplasmic. The helical transmembrane segment at 136–156 (ALTSISLVWALSLFFSSPYLS) threads the bilayer. Residues 157–179 (YYQQMDLDGTTVCIPAWSVHHRQ) are Extracellular-facing. A helical membrane pass occupies residues 180–200 (AMDICTFIFGYLIPVLILGIT). Topologically, residues 201–230 (YARTIRYLWTSVDPMQDMSESRKAKRKVTK) are cytoplasmic. The helical transmembrane segment at 231-251 (MIIIVAVLFCLCWLPHHLVIL) threads the bilayer. Over 252-268 (CMWFGHFPLNHTTYVLR) the chain is Extracellular. Residues 269 to 289 (ILSHLVAYANSCLNPIVYALV) form a helical membrane-spanning segment. Over 290–363 (SKHFRKGFKK…TSAFMTFNVT (74 aa)) the chain is Cytoplasmic.

Belongs to the G-protein coupled receptor 1 family. In terms of tissue distribution, expressed in neurons in the ventral area of the interpeduncular nucleus (IPN) where expression often overlaps with spx1.

It is found in the membrane. Functionally, receptor for the hormone galanin. Receptor for the hormones spexin-1 and spexin-2. The chain is Galanin receptor 2a from Danio rerio (Zebrafish).